The following is a 1916-amino-acid chain: Diacylglycerol kinase eta (1916 aa).

The interval 1–36 (MAHIKLDTLDVVQRPGTTRRSNSNSGRSSACSSGSL) is disordered. The segment covering 19–36 (RRSNSNSGRSSACSSGSL) has biased composition (low complexity). In terms of domain architecture, PH spans 82 to 175 (AIIKEGFLLK…WLGSLKTATT (94 aa)). 2 consecutive Phorbol-ester/DAG-type zinc fingers follow at residues 195–245 (HHHW…IANC) and 268–319 (PHQW…AVAC). The DAGKc domain maps to 350-486 (GNFSPLLVFV…DRWSIMVFEK (137 aa)). Basic and acidic residues predominate over residues 623–644 (DEINTKERRSSRSLRSSEKEAL). Disordered stretches follow at residues 623–648 (DEIN…QSRA), 846–874 (DRGK…KEDN), 1018–1067 (TLCS…DDNP), and 1183–1214 (TSTS…SVKP). In terms of domain architecture, SAM spans 1853 to 1916 (WSVNEVVTWL…LQAIKDLSEN (64 aa)).

It belongs to the eukaryotic diacylglycerol kinase family.

It localises to the cytoplasm. The catalysed reaction is a 1,2-diacyl-sn-glycerol + ATP = a 1,2-diacyl-sn-glycero-3-phosphate + ADP + H(+). Functionally, phosphorylates diacylglycerol (DAG) to generate phosphatidic acid (PA). This Drosophila ananassae (Fruit fly) protein is Diacylglycerol kinase eta.